The sequence spans 215 residues: Outer-membrane lipoprotein LolB (215 aa).

An N-terminal signal peptide occupies residues 1–19 (MSKLRKITSLIFLTIIMVG). Cys-20 is lipidated: N-palmitoyl cysteine. A lipid anchor (S-diacylglycerol cysteine) is attached at Cys-20.

This sequence belongs to the LolB family. In terms of assembly, monomer.

The protein resides in the cell outer membrane. Functionally, plays a critical role in the incorporation of lipoproteins in the outer membrane after they are released by the LolA protein. The polypeptide is Outer-membrane lipoprotein LolB (Vibrio atlanticus (strain LGP32) (Vibrio splendidus (strain Mel32))).